A 443-amino-acid polypeptide reads, in one-letter code: 3-phosphoshikimate 1-carboxyvinyltransferase (443 aa).

The disordered stretch occupies residues methionine 1 to valine 22. Lysine 28, serine 29, and arginine 33 together coordinate 3-phosphoshikimate. Residue lysine 28 participates in phosphoenolpyruvate binding. 2 residues coordinate phosphoenolpyruvate: glycine 101 and arginine 129. 3-phosphoshikimate-binding residues include serine 174, glutamine 176, aspartate 326, and lysine 353. Glutamine 176 is a binding site for phosphoenolpyruvate. Aspartate 326 serves as the catalytic Proton acceptor. Arginine 357 and arginine 400 together coordinate phosphoenolpyruvate.

It belongs to the EPSP synthase family. As to quaternary structure, monomer.

Its subcellular location is the cytoplasm. It carries out the reaction 3-phosphoshikimate + phosphoenolpyruvate = 5-O-(1-carboxyvinyl)-3-phosphoshikimate + phosphate. Its pathway is metabolic intermediate biosynthesis; chorismate biosynthesis; chorismate from D-erythrose 4-phosphate and phosphoenolpyruvate: step 6/7. Its function is as follows. Catalyzes the transfer of the enolpyruvyl moiety of phosphoenolpyruvate (PEP) to the 5-hydroxyl of shikimate-3-phosphate (S3P) to produce enolpyruvyl shikimate-3-phosphate and inorganic phosphate. This Afipia carboxidovorans (strain ATCC 49405 / DSM 1227 / KCTC 32145 / OM5) (Oligotropha carboxidovorans) protein is 3-phosphoshikimate 1-carboxyvinyltransferase.